The primary structure comprises 513 residues: ATP synthase subunit alpha (513 aa).

ATP is bound at residue 169–176; it reads GDRQTGKT.

This sequence belongs to the ATPase alpha/beta chains family. F-type ATPases have 2 components, CF(1) - the catalytic core - and CF(0) - the membrane proton channel. CF(1) has five subunits: alpha(3), beta(3), gamma(1), delta(1), epsilon(1). CF(0) has three main subunits: a(1), b(2) and c(9-12). The alpha and beta chains form an alternating ring which encloses part of the gamma chain. CF(1) is attached to CF(0) by a central stalk formed by the gamma and epsilon chains, while a peripheral stalk is formed by the delta and b chains.

It localises to the cell inner membrane. The enzyme catalyses ATP + H2O + 4 H(+)(in) = ADP + phosphate + 5 H(+)(out). Produces ATP from ADP in the presence of a proton gradient across the membrane. The alpha chain is a regulatory subunit. This Shewanella sp. (strain ANA-3) protein is ATP synthase subunit alpha.